The primary structure comprises 500 residues: Protein DETOXIFICATION 29 (500 aa).

The next 12 helical transmembrane spans lie at 67-87 (GAIT…AVSV), 91-111 (VVAG…ETLC), 132-152 (VILN…APIL), 161-181 (ISSA…AYAI), 197-217 (VMAV…WFVI), 227-247 (LAVV…VYIF), 277-297 (AVML…AGYL), 302-322 (ISVA…MIAI), 349-369 (LVAV…LLIF), 393-413 (ILAL…VAVG), 419-439 (VVAY…GLLL), and 449-469 (GIWC…TWMI).

This sequence belongs to the multi antimicrobial extrusion (MATE) (TC 2.A.66.1) family.

The protein localises to the vacuole membrane. The protein is Protein DETOXIFICATION 29 of Arabidopsis thaliana (Mouse-ear cress).